The sequence spans 315 residues: Putative glycosyltransferase ORF315 (315 aa).

This sequence belongs to the glycosyltransferase group 1 family. Glycosyltransferase 4 subfamily.

The polypeptide is Putative glycosyltransferase ORF315 (Acidianus convivator (ABV)).